The chain runs to 417 residues: D-amino acid dehydrogenase (417 aa).

3 to 17 (VVILGSGVIGVTSAW) is an FAD binding site.

Belongs to the DadA oxidoreductase family. Requires FAD as cofactor.

The catalysed reaction is a D-alpha-amino acid + A + H2O = a 2-oxocarboxylate + AH2 + NH4(+). It participates in amino-acid degradation; D-alanine degradation; NH(3) and pyruvate from D-alanine: step 1/1. In terms of biological role, oxidative deamination of D-amino acids. This Edwardsiella ictaluri (strain 93-146) protein is D-amino acid dehydrogenase.